The primary structure comprises 360 residues: Inhibin alpha chain (360 aa).

A signal peptide spans 1–17 (MWLQLLLLLLAPQGGHG). A propeptide spanning residues 18–60 (CHGLELDRELVLAKVRALFLDALGPPPVTGEGGDPGVRRLHRR) is cleaved from the precursor. Positions 61–226 (HAVGGFMRRG…PPSGGERARR (166 aa)) are cleaved as a propeptide — inhibin alpha N-terminal region. N-linked (GlcNAc...) asparagine glycosylation is found at asparagine 140 and asparagine 262. Disulfide bonds link cysteine 256–cysteine 322, cysteine 285–cysteine 357, and cysteine 289–cysteine 359.

Belongs to the TGF-beta family. As to quaternary structure, dimeric, linked by one or more disulfide bonds. Activin B is a dimer of alpha and beta-B. Inhibin A is a dimer of alpha and beta-A. Inhibin B is a dimer of alpha and beta-B. Interacts with TGFBR3L; this interaction regulates female fertility. In terms of processing, proteolytic processing yields a number of bioactive forms, consisting either solely of the mature alpha chain, of the most N-terminal propeptide linked through a disulfide bond to the mature alpha chain, or of the entire proprotein.

The protein localises to the secreted. In terms of biological role, inhibins and activins inhibit and activate, respectively, the secretion of follitropin by the pituitary gland. Inhibins/activins are involved in regulating a number of diverse functions such as hypothalamic and pituitary hormone secretion, gonadal hormone secretion, germ cell development and maturation, erythroid differentiation, insulin secretion, nerve cell survival, embryonic axial development or bone growth, depending on their subunit composition. Inhibins appear to oppose the functions of activins. Inhibin A is a dimer of alpha/INHA and beta-A/INHBA that functions as a feedback regulator in the hypothalamic-pituitary-gonadal (HPG) axis. Inhibits the secretion of FSH from the anterior pituitary gland by acting on pituitary gonadotrope cells. Antagonizes activin A by binding to the proteoglycan, betaglycan, and forming a stable complex with and, thereby, sequestering type II activin receptors while excluding type I receptor. Its function is as follows. Inhibin B is a dimer of alpha and beta-B that plays a crucial role in the regulation of the reproductive system by inhibiting the secretion of follicle-stimulating hormone (FSH) from the anterior pituitary gland. Thereby, maintains reproductive homeostasis in both males and females. Acts as a more potent suppressor of FSH release than inhibin A. Functions as competitive receptor antagonist binding activin type II receptors with high affinity in the presence of the TGF-beta type III coreceptor/TGFBR3L. This chain is Inhibin alpha chain (INHA), found in Bos taurus (Bovine).